A 347-amino-acid polypeptide reads, in one-letter code: Phosphoribosylformylglycinamidine cyclo-ligase (347 aa).

This sequence belongs to the AIR synthase family.

The protein localises to the cytoplasm. The catalysed reaction is 2-formamido-N(1)-(5-O-phospho-beta-D-ribosyl)acetamidine + ATP = 5-amino-1-(5-phospho-beta-D-ribosyl)imidazole + ADP + phosphate + H(+). It participates in purine metabolism; IMP biosynthesis via de novo pathway; 5-amino-1-(5-phospho-D-ribosyl)imidazole from N(2)-formyl-N(1)-(5-phospho-D-ribosyl)glycinamide: step 2/2. The sequence is that of Phosphoribosylformylglycinamidine cyclo-ligase from Prochlorococcus marinus (strain MIT 9301).